The chain runs to 298 residues: Putative S-adenosyl-L-methionine-dependent methyltransferase MSMEG_1480/MSMEI_1444 (298 aa).

S-adenosyl-L-methionine contacts are provided by residues Asp127 and 156 to 157 (DL).

It belongs to the UPF0677 family.

Its function is as follows. Exhibits S-adenosyl-L-methionine-dependent methyltransferase activity. The protein is Putative S-adenosyl-L-methionine-dependent methyltransferase MSMEG_1480/MSMEI_1444 of Mycolicibacterium smegmatis (strain ATCC 700084 / mc(2)155) (Mycobacterium smegmatis).